A 424-amino-acid chain; its full sequence is Inositol phosphosphingolipids phospholipase C (424 aa).

E49 is a Mg(2+) binding site. The active-site Proton acceptor is H289. 2 consecutive transmembrane segments (helical) span residues 335–357 (LRIA…IAWC) and 364–386 (VIIL…CIGL).

The protein belongs to the neutral sphingomyelinase family. The cofactor is Mg(2+).

It is found in the cell membrane. It localises to the endoplasmic reticulum membrane. Its pathway is lipid metabolism; sphingolipid metabolism. Functionally, inositol phosphosphingolipids phospholipase essential for the coordination of cell wall formation. Responsible for the hydrolysis of the phosphosphingolipids (IPS), inositol phosphorylceramide (IPC), mannosylinositol phosphorylceramide (MIPC), and mannosyldiinositol phosphorylceramide (M(IP)2C). The polypeptide is Inositol phosphosphingolipids phospholipase C (css1) (Schizosaccharomyces pombe (strain 972 / ATCC 24843) (Fission yeast)).